We begin with the raw amino-acid sequence, 36 residues long: Photosystem I reaction center subunit VIII (36 aa).

Residues 6–28 (LPSIFVPLVGLMFPAIAMASLSL) form a helical membrane-spanning segment.

It belongs to the PsaI family.

The protein resides in the plastid. It is found in the chloroplast thylakoid membrane. May help in the organization of the PsaL subunit. The polypeptide is Photosystem I reaction center subunit VIII (Calycanthus floridus var. glaucus (Eastern sweetshrub)).